The chain runs to 211 residues: Ion-translocating oxidoreductase complex subunit G (211 aa).

Residues 9–29 (GLTLAIFACATTGLVAMTQYL) form a helical membrane-spanning segment. Thr175 carries the FMN phosphoryl threonine modification.

This sequence belongs to the RnfG family. In terms of assembly, the complex is composed of six subunits: RnfA, RnfB, RnfC, RnfD, RnfE and RnfG. FMN is required as a cofactor.

It localises to the cell inner membrane. Part of a membrane-bound complex that couples electron transfer with translocation of ions across the membrane. This Vibrio vulnificus (strain YJ016) protein is Ion-translocating oxidoreductase complex subunit G.